The sequence spans 116 residues: Protein Rev (116 aa).

Phosphoserine; by host CK2 is present on residues Ser-5 and Ser-8. The tract at residues 18–26 (LIKVLYQSN) is homomultimerization. The disordered stretch occupies residues 23-48 (YQSNPPPSSEGTRQARRNRRRRWRER). The Nuclear localization signal and RNA-binding (RRE) signature appears at 34-50 (TRQARRNRRRRWRERQR). The segment covering 36 to 47 (QARRNRRRRWRE) has biased composition (basic residues). A Nuclear export signal and binding to XPO1 motif is present at residues 73-84 (FQLPPLERLTLD). The interval 90-116 (GTSGTQGVGSPQILVESPPVLDSGTKE) is disordered. Ser-92 and Ser-99 each carry phosphoserine; by host.

Belongs to the HIV-1 REV protein family. Homomultimer; when bound to the RRE. Multimeric assembly is essential for activity and may involve XPO1. Binds to human KPNB1, XPO1, TNPO1, RANBP5 and IPO7. Interacts with the viral Integrase. Interacts with human KHDRBS1. Interacts with human NAP1; this interaction decreases Rev multimerization and stimulates its activity. Interacts with human DEAD-box helicases DDX3 and DDX24; these interactions may serve for viral RNA export to the cytoplasm and packaging, respectively. Interacts with human PSIP1; this interaction may inhibit HIV-1 DNA integration by promoting dissociation of the Integrase-LEDGF/p75 complex. Post-translationally, asymmetrically arginine dimethylated at one site by host PRMT6. Methylation impairs the RNA-binding activity and export of viral RNA from the nucleus to the cytoplasm. Phosphorylated by protein kinase CK2. Presence of, and maybe binding to the N-terminus of the regulatory beta subunit of CK2 is necessary for CK2-mediated Rev's phosphorylation.

The protein localises to the host nucleus. It localises to the host nucleolus. It is found in the host cytoplasm. In terms of biological role, escorts unspliced or incompletely spliced viral pre-mRNAs (late transcripts) out of the nucleus of infected cells. These pre-mRNAs carry a recognition sequence called Rev responsive element (RRE) located in the env gene, that is not present in fully spliced viral mRNAs (early transcripts). This function is essential since most viral proteins are translated from unspliced or partially spliced pre-mRNAs which cannot exit the nucleus by the pathway used by fully processed cellular mRNAs. Rev itself is translated from a fully spliced mRNA that readily exits the nucleus. Rev's nuclear localization signal (NLS) binds directly to KPNB1/Importin beta-1 without previous binding to KPNA1/Importin alpha-1. KPNB1 binds to the GDP bound form of RAN (Ran-GDP) and targets Rev to the nucleus. In the nucleus, the conversion from Ran-GDP to Ran-GTP dissociates Rev from KPNB1 and allows Rev's binding to the RRE in viral pre-mRNAs. Rev multimerization on the RRE via cooperative assembly exposes its nuclear export signal (NES) to the surface. Rev can then form a complex with XPO1/CRM1 and Ran-GTP, leading to nuclear export of the complex. Conversion from Ran-GTP to Ran-GDP mediates dissociation of the Rev/RRE/XPO1/RAN complex, so that Rev can return to the nucleus for a subsequent round of export. Beside KPNB1, also seems to interact with TNPO1/Transportin-1, RANBP5/IPO5 and IPO7/RANBP7 for nuclear import. The nucleoporin-like HRB/RIP is an essential cofactor that probably indirectly interacts with Rev to release HIV RNAs from the perinuclear region to the cytoplasm. This Human immunodeficiency virus type 1 group M subtype B (isolate YU-2) (HIV-1) protein is Protein Rev.